We begin with the raw amino-acid sequence, 600 residues long: ATP-dependent lipid A-core flippase (600 aa).

4 helical membrane-spanning segments follow: residues V26 to L46, L82 to L102, V167 to I187, and P266 to L286. Residues L30–K321 form the ABC transmembrane type-1 domain. In terms of domain architecture, ABC transporter spans L353–M589. G387–S394 provides a ligand contact to ATP.

This sequence belongs to the ABC transporter superfamily. Lipid exporter (TC 3.A.1.106) family. In terms of assembly, homodimer.

It is found in the cell inner membrane. The catalysed reaction is ATP + H2O + lipid A-core oligosaccharideSide 1 = ADP + phosphate + lipid A-core oligosaccharideSide 2.. Its function is as follows. Involved in lipopolysaccharide (LPS) biosynthesis. Translocates lipid A-core from the inner to the outer leaflet of the inner membrane. Transmembrane domains (TMD) form a pore in the inner membrane and the ATP-binding domain (NBD) is responsible for energy generation. The polypeptide is ATP-dependent lipid A-core flippase (Pseudomonas syringae pv. tomato (strain ATCC BAA-871 / DC3000)).